A 134-amino-acid chain; its full sequence is Replication enhancer protein (134 aa).

This sequence belongs to the geminiviridae replication enhancer protein family. In terms of assembly, homooligomer. Interacts with the replication-associated protein (REP). Interacts with host proliferating cell nuclear antigen (PCNA). Interacts with host retinoblastoma-related protein 1 (RBR1), and may thereby deregulate the host cell cycle. Oligomerization and interaction with PCNA are necessary for optimal replication enhancement.

Increases viral DNA accumulation. Enhances infectivity and symptom expression. The chain is Replication enhancer protein from Nicotiana tabacum (Common tobacco).